A 103-amino-acid chain; its full sequence is MVARSKGYRSKTRKLLEKKVREKGAIPKLSLLMHDYSQGEYVVVKINPSIHKGMPHRRYHGKVGLVVGKRGKAYEVKVNIGDKERVLIVRPEHLIPFNGIQKR.

The protein belongs to the eukaryotic ribosomal protein eL21 family.

This is Large ribosomal subunit protein eL21 from Sulfolobus acidocaldarius (strain ATCC 33909 / DSM 639 / JCM 8929 / NBRC 15157 / NCIMB 11770).